The following is a 388-amino-acid chain: Chorismate synthase (388 aa).

Residues Arg-39 and Arg-45 each contribute to the NADP(+) site. Residues 130-132, 251-252, Gly-296, 311-315, and Arg-337 each bind FMN; these read RSS, NA, and KPIPT.

It belongs to the chorismate synthase family. As to quaternary structure, homotetramer. FMNH2 serves as cofactor.

The enzyme catalyses 5-O-(1-carboxyvinyl)-3-phosphoshikimate = chorismate + phosphate. It functions in the pathway metabolic intermediate biosynthesis; chorismate biosynthesis; chorismate from D-erythrose 4-phosphate and phosphoenolpyruvate: step 7/7. In terms of biological role, catalyzes the anti-1,4-elimination of the C-3 phosphate and the C-6 proR hydrogen from 5-enolpyruvylshikimate-3-phosphate (EPSP) to yield chorismate, which is the branch point compound that serves as the starting substrate for the three terminal pathways of aromatic amino acid biosynthesis. This reaction introduces a second double bond into the aromatic ring system. The polypeptide is Chorismate synthase (Streptococcus agalactiae serotype Ia (strain ATCC 27591 / A909 / CDC SS700)).